The following is a 123-amino-acid chain: Small ribosomal subunit protein uS12 (123 aa).

Residues 1–31 (MPTINQLIRKPREAQKARDKAPALQASPQKR) are disordered. Residues 10 to 21 (KPREAQKARDKA) are compositionally biased toward basic and acidic residues. D89 bears the 3-methylthioaspartic acid mark.

It belongs to the universal ribosomal protein uS12 family. As to quaternary structure, part of the 30S ribosomal subunit. Contacts proteins S8 and S17. May interact with IF1 in the 30S initiation complex.

Functionally, with S4 and S5 plays an important role in translational accuracy. Interacts with and stabilizes bases of the 16S rRNA that are involved in tRNA selection in the A site and with the mRNA backbone. Located at the interface of the 30S and 50S subunits, it traverses the body of the 30S subunit contacting proteins on the other side and probably holding the rRNA structure together. The combined cluster of proteins S8, S12 and S17 appears to hold together the shoulder and platform of the 30S subunit. The chain is Small ribosomal subunit protein uS12 from Xanthobacter autotrophicus (strain ATCC BAA-1158 / Py2).